The sequence spans 512 residues: Cytoplasmic tRNA 2-thiolation protein 2-B (512 aa).

Residues 196–215 (VTDSDSPGSSDKMYQSTCSR) are disordered. Residues 199–214 (SDSPGSSDKMYQSTCS) show a composition bias toward polar residues.

The protein belongs to the CTU2/NCS2 family.

It is found in the cytoplasm. The protein operates within tRNA modification; 5-methoxycarbonylmethyl-2-thiouridine-tRNA biosynthesis. Its function is as follows. Plays a central role in 2-thiolation of mcm(5)S(2)U at tRNA wobble positions of tRNA(Lys), tRNA(Glu) and tRNA(Gln). May act by forming a heterodimer with ctu1/atpbd3 that ligates sulfur from thiocarboxylated urm1 onto the uridine of tRNAs at wobble position. This is Cytoplasmic tRNA 2-thiolation protein 2-B (ctu2-b) from Xenopus laevis (African clawed frog).